The following is a 51-amino-acid chain: Small ribosomal subunit protein eS31 (51 aa).

The Zn(2+) site is built by C21, C24, C39, and C42. The C4-type zinc-finger motif lies at 21-42 (CPRCGPGVFLAEHEDRFSCGRC).

It belongs to the eukaryotic ribosomal protein eS31 family. In terms of assembly, part of the 30S ribosomal subunit. It depends on Zn(2+) as a cofactor.

The polypeptide is Small ribosomal subunit protein eS31 (Picrophilus torridus (strain ATCC 700027 / DSM 9790 / JCM 10055 / NBRC 100828 / KAW 2/3)).